The primary structure comprises 120 residues: Large ribosomal subunit protein bL19 (120 aa).

The protein belongs to the bacterial ribosomal protein bL19 family.

Its function is as follows. This protein is located at the 30S-50S ribosomal subunit interface and may play a role in the structure and function of the aminoacyl-tRNA binding site. This Thermosynechococcus vestitus (strain NIES-2133 / IAM M-273 / BP-1) protein is Large ribosomal subunit protein bL19.